A 254-amino-acid polypeptide reads, in one-letter code: Alcohol dehydrogenase (254 aa).

Position 10-33 (10-33) interacts with NAD(+); it reads FVAGLGGIGLDTSREIVKSGPKNL. Residue S138 coordinates substrate. Residue Y151 is the Proton acceptor of the active site.

The protein belongs to the short-chain dehydrogenases/reductases (SDR) family. In terms of assembly, homodimer.

It catalyses the reaction a primary alcohol + NAD(+) = an aldehyde + NADH + H(+). The enzyme catalyses a secondary alcohol + NAD(+) = a ketone + NADH + H(+). In Drosophila nigra (Fruit fly), this protein is Alcohol dehydrogenase (Adh).